The following is a 212-amino-acid chain: Probable GTP-binding protein EngB (212 aa).

Positions 27–211 constitute an EngB-type G domain; the sequence is GPPEIAFAGR…QAAIVLAANG (185 aa). GTP-binding positions include 35–42, 62–66, 89–92, 156–159, and 190–192; these read GRSNVGKS, GRTQE, DMPG, TKTD, and TSS. Residues S42 and T64 each coordinate Mg(2+).

The protein belongs to the TRAFAC class TrmE-Era-EngA-EngB-Septin-like GTPase superfamily. EngB GTPase family. Mg(2+) is required as a cofactor.

Functionally, necessary for normal cell division and for the maintenance of normal septation. The polypeptide is Probable GTP-binding protein EngB (Mesorhizobium japonicum (strain LMG 29417 / CECT 9101 / MAFF 303099) (Mesorhizobium loti (strain MAFF 303099))).